The sequence spans 113 residues: Ribonuclease P protein component (113 aa).

The protein belongs to the RnpA family. In terms of assembly, consists of a catalytic RNA component (M1 or rnpB) and a protein subunit.

The catalysed reaction is Endonucleolytic cleavage of RNA, removing 5'-extranucleotides from tRNA precursor.. Functionally, RNaseP catalyzes the removal of the 5'-leader sequence from pre-tRNA to produce the mature 5'-terminus. It can also cleave other RNA substrates such as 4.5S RNA. The protein component plays an auxiliary but essential role in vivo by binding to the 5'-leader sequence and broadening the substrate specificity of the ribozyme. The sequence is that of Ribonuclease P protein component from Vesicomyosocius okutanii subsp. Calyptogena okutanii (strain HA).